Consider the following 299-residue polypeptide: Non-structural protein V (299 aa).

The interval 41-99 (DNPGQERATCREEKAGSSGLSKPCLSAIGSTEGGAPRIRGQGPGESDDDAETLGIPPRN) is disordered. Positions 110–120 (YYVYDHSGEAV) are interaction with host STAT1. Low complexity predominate over residues 134–145 (GLDGDSTLSGGD). Residues 134-162 (GLDGDSTLSGGDNESENSDVDIGEPDTEG) form a disordered region. Residues 146 to 160 (NESENSDVDIGEPDT) are compositionally biased toward acidic residues. The Zn(2+) site is built by histidine 232, cysteine 251, cysteine 255, cysteine 267, cysteine 269, cysteine 272, cysteine 276, and cysteine 279.

This sequence belongs to the paramyxoviruses V protein family. As to quaternary structure, interacts with host IFIH1/MDA5 and DHX58/LGP2; these interactions are involved in the inhibition of the host type I interferon signaling pathway. Interacts with host TYK2; this interaction inhibits the type I interferon signaling pathway without affecting the type II pathway. Interacts with host IRF7; this interaction inhibits IRF7 translocation to the nucleus. Interacts with host CHUK. Interacts with host RELA/p65; this interaction inhibits the nuclear translocation of NF-KappaB. Interacts (via N-terminus) with host STAT1 and JAK1; these interactions inhibit STAT1 phosphorylation by Jak1 and thereby the type I interferon signaling pathway. Interacts (via C-terminus) with host STAT2; this interaction is involved in the inhibition of the host type I interferon signaling pathway. Forms a complex with host PPP1CA and PPP1CC; this interaction prevents dephosphorylation of host IFIH1/MDA5 and leads to the inhibition of the host type I interferon signaling pathway. Interacts with host IRF9; this interaction prevents the binding of IRF9 to STAT2 and thereby the type I interferon signaling pathway.

The protein resides in the host cytoplasm. Plays an essential role in the inhibition of host immune response. Prevents the establishment of cellular antiviral state by blocking interferon-alpha/beta (IFN-alpha/beta) production and signaling pathway. Interacts with host IFIH1/MDA5 and DHX58/LGP2 to inhibit the transduction pathway involved in the activation of IFN-beta promoter, thus protecting the virus against cell antiviral state. Blocks the type I interferon signaling pathway by interacting with host TYK2 and thereby inhibiting downstream STAT1 and STAT2 phosphorylation. Moderately affects the type II interferon signaling. The chain is Non-structural protein V (P/V) from Measles virus (strain Edmonston-Schwarz vaccine) (MeV).